Consider the following 895-residue polypeptide: Zinc finger protein 574 (895 aa).

3 C2H2-type zinc fingers span residues 16 to 38 (YVCS…QNSH), 76 to 98 (YQCL…QELH), and 126 to 148 (YECV…RQTH). Ser-164 is subject to Phosphoserine. The segment at 214-236 (YKCSECSQLFQLPADFLEHQATH) adopts a C2H2-type 4 zinc-finger fold. Residues 239–301 (APVPESQEPA…RARRNNSGEA (63 aa)) form a disordered region. The span at 247–257 (PALQQEVQASS) shows a compositional bias: polar residues. Residues 274–287 (HSYELRNGEAIGRD) show a composition bias toward basic and acidic residues. Phosphoserine is present on Ser-298. C2H2-type zinc fingers lie at residues 309–331 (LFCS…LRSH), 336–358 (FKCP…LGDH), 364–386 (FLCV…RRAH), and 392–413 (HSCP…RRTH). The interval 434 to 460 (FPEPAPAETGEPEAPEPPVSEETSAGP) is disordered. 6 C2H2-type zinc fingers span residues 466-489 (YRCL…RFVH), 495-517 (HKCS…LRTH), 523-545 (FPCP…RLTH), 551-573 (YRCG…RLVH), 579-601 (YRCQ…RYHH), and 607-630 (YKCR…LVVH). The C2H2-type 15; degenerate zinc-finger motif lies at 636–659 (HRCPSCGAAFPSSLRLREHRCAAA). The C2H2-type 16 zinc-finger motif lies at 667–689 (FECGTCGKKVGSAARLQAHEAAH). Positions 687–732 (AAHAAAGPGEVLAKEPPAPRAPRATRAPVASPAALGGTATASPAPA) are disordered. Positions 707 to 731 (APRATRAPVASPAALGGTATASPAP) are enriched in low complexity. Ser-717 carries the phosphoserine modification. Thr-724 carries the phosphothreonine modification. Position 728 is a phosphoserine (Ser-728). 4 consecutive C2H2-type zinc fingers follow at residues 737 to 759 (LECS…RRIH), 765 to 787 (YPCP…RRLH), 793 to 815 (FACE…RRIH), and 821 to 843 (YSCP…RKTH). Arg-831 is subject to Asymmetric dimethylarginine.

The protein belongs to the krueppel C2H2-type zinc-finger protein family.

It localises to the nucleus. Its function is as follows. May be involved in transcriptional regulation. The sequence is that of Zinc finger protein 574 (ZNF574) from Pongo abelii (Sumatran orangutan).